Here is a 192-residue protein sequence, read N- to C-terminus: Orotate phosphoribosyltransferase (192 aa).

5-phospho-alpha-D-ribose 1-diphosphate contacts are provided by residues R101, K102, K105, H107, and 129–137 (EDVITTGGS). Orotate contacts are provided by T133 and R161.

The protein belongs to the purine/pyrimidine phosphoribosyltransferase family. PyrE subfamily. As to quaternary structure, homodimer. Mg(2+) is required as a cofactor.

The catalysed reaction is orotidine 5'-phosphate + diphosphate = orotate + 5-phospho-alpha-D-ribose 1-diphosphate. It functions in the pathway pyrimidine metabolism; UMP biosynthesis via de novo pathway; UMP from orotate: step 1/2. Functionally, catalyzes the transfer of a ribosyl phosphate group from 5-phosphoribose 1-diphosphate to orotate, leading to the formation of orotidine monophosphate (OMP). This chain is Orotate phosphoribosyltransferase, found in Sorangium cellulosum (strain So ce56) (Polyangium cellulosum (strain So ce56)).